Consider the following 1486-residue polypeptide: Chromosome partition protein MukB (1486 aa).

Residue 34-41 (GGNGAGKS) coordinates ATP. 3 coiled-coil regions span residues 326 to 418 (LEAD…QYNQ), 444 to 480 (LETF…QAYQ), and 509 to 603 (RHLA…RAPV). Residues 666-783 (PGGSEDQRLN…EVPLFGRAAR (118 aa)) form a flexible hinge region. 3 coiled-coil regions span residues 835-923 (EAEI…AKLE), 977-1115 (EMLS…TAKA), and 1209-1266 (VEAI…QNVS).

Belongs to the SMC family. MukB subfamily. As to quaternary structure, homodimerization via its hinge domain. Binds to DNA via its C-terminal region. Interacts, and probably forms a ternary complex, with MukE and MukF via its C-terminal region. The complex formation is stimulated by calcium or magnesium. Interacts with tubulin-related protein FtsZ.

It is found in the cytoplasm. The protein resides in the nucleoid. In terms of biological role, plays a central role in chromosome condensation, segregation and cell cycle progression. Functions as a homodimer, which is essential for chromosome partition. Involved in negative DNA supercoiling in vivo, and by this means organize and compact chromosomes. May achieve or facilitate chromosome segregation by condensation DNA from both sides of a centrally located replisome during cell division. This chain is Chromosome partition protein MukB, found in Escherichia coli O81 (strain ED1a).